Consider the following 205-residue polypeptide: Holliday junction branch migration complex subunit RuvA (205 aa).

A domain I region spans residues 1 to 64 (MIGKLKGVVD…EDMIRLYGFR (64 aa)). The domain II stretch occupies residues 65-143 (SDAEREWFRL…AFAPVDPALV (79 aa)). Residues 144 to 152 (RLAGAVEAR) are flexible linker. Positions 153–205 (TAPQPVADAISALVNLGYPQAQASAAVAAALQSAGAEAEAKTLIRLGLRELAR) are domain III.

It belongs to the RuvA family. In terms of assembly, homotetramer. Forms an RuvA(8)-RuvB(12)-Holliday junction (HJ) complex. HJ DNA is sandwiched between 2 RuvA tetramers; dsDNA enters through RuvA and exits via RuvB. An RuvB hexamer assembles on each DNA strand where it exits the tetramer. Each RuvB hexamer is contacted by two RuvA subunits (via domain III) on 2 adjacent RuvB subunits; this complex drives branch migration. In the full resolvosome a probable DNA-RuvA(4)-RuvB(12)-RuvC(2) complex forms which resolves the HJ.

It is found in the cytoplasm. In terms of biological role, the RuvA-RuvB-RuvC complex processes Holliday junction (HJ) DNA during genetic recombination and DNA repair, while the RuvA-RuvB complex plays an important role in the rescue of blocked DNA replication forks via replication fork reversal (RFR). RuvA specifically binds to HJ cruciform DNA, conferring on it an open structure. The RuvB hexamer acts as an ATP-dependent pump, pulling dsDNA into and through the RuvAB complex. HJ branch migration allows RuvC to scan DNA until it finds its consensus sequence, where it cleaves and resolves the cruciform DNA. The protein is Holliday junction branch migration complex subunit RuvA of Methylobacterium sp. (strain 4-46).